We begin with the raw amino-acid sequence, 678 residues long: Exoribonuclease 2 (678 aa).

In terms of domain architecture, RNB spans 193–521; the sequence is REDLTALPFV…INHRLLKAHI (329 aa). Residues 568–650 form the S1 motif domain; that stretch reads ETRFQAEIFD…ENRSLVGKPT (83 aa). The tract at residues 658 to 678 is disordered; that stretch reads SETQTSTEQPAEGAENNEPQA.

It belongs to the RNR ribonuclease family. RNase II subfamily.

It localises to the cytoplasm. The catalysed reaction is Exonucleolytic cleavage in the 3'- to 5'-direction to yield nucleoside 5'-phosphates.. Functionally, involved in mRNA degradation. Hydrolyzes single-stranded polyribonucleotides processively in the 3' to 5' direction. This chain is Exoribonuclease 2, found in Vibrio cholerae serotype O1 (strain ATCC 39541 / Classical Ogawa 395 / O395).